The sequence spans 408 residues: NADH-quinone oxidoreductase subunit D (408 aa).

This sequence belongs to the complex I 49 kDa subunit family. NDH-1 is composed of 14 different subunits. Subunits NuoB, C, D, E, F, and G constitute the peripheral sector of the complex.

The protein localises to the cell inner membrane. The enzyme catalyses a quinone + NADH + 5 H(+)(in) = a quinol + NAD(+) + 4 H(+)(out). In terms of biological role, NDH-1 shuttles electrons from NADH, via FMN and iron-sulfur (Fe-S) centers, to quinones in the respiratory chain. The immediate electron acceptor for the enzyme in this species is believed to be ubiquinone. Couples the redox reaction to proton translocation (for every two electrons transferred, four hydrogen ions are translocated across the cytoplasmic membrane), and thus conserves the redox energy in a proton gradient. In Campylobacter jejuni subsp. jejuni serotype O:23/36 (strain 81-176), this protein is NADH-quinone oxidoreductase subunit D.